A 206-amino-acid chain; its full sequence is Octanoyltransferase (206 aa).

The BPL/LPL catalytic domain maps to 30 to 206; sequence PETNDEIWLV…EFVTLLNNSI (177 aa). Residues 69–76, 137–139, and 150–152 each bind substrate; these read RGGQVTYH, SLG, and GIA. The active-site Acyl-thioester intermediate is the cysteine 168.

The protein belongs to the LipB family.

The protein localises to the cytoplasm. The catalysed reaction is octanoyl-[ACP] + L-lysyl-[protein] = N(6)-octanoyl-L-lysyl-[protein] + holo-[ACP] + H(+). The protein operates within protein modification; protein lipoylation via endogenous pathway; protein N(6)-(lipoyl)lysine from octanoyl-[acyl-carrier-protein]: step 1/2. Functionally, catalyzes the transfer of endogenously produced octanoic acid from octanoyl-acyl-carrier-protein onto the lipoyl domains of lipoate-dependent enzymes. Lipoyl-ACP can also act as a substrate although octanoyl-ACP is likely to be the physiological substrate. This is Octanoyltransferase from Francisella tularensis subsp. novicida (strain U112).